We begin with the raw amino-acid sequence, 68 residues long: uncharacterized protein (68 aa).

This is an uncharacterized protein from Dryophytes versicolor (chameleon treefrog).